Reading from the N-terminus, the 593-residue chain is UvrABC system protein C (593 aa).

A GIY-YIG domain is found at 14–91 (DSPGCYLHKD…IQENMPKYNI (78 aa)). Positions 196 to 231 (NKIVNGLTEKMKSAAMTMEFERAAEYRDLIEAISLL) constitute a UVR domain.

Belongs to the UvrC family. In terms of assembly, interacts with UvrB in an incision complex.

The protein localises to the cytoplasm. Functionally, the UvrABC repair system catalyzes the recognition and processing of DNA lesions. UvrC both incises the 5' and 3' sides of the lesion. The N-terminal half is responsible for the 3' incision and the C-terminal half is responsible for the 5' incision. In Streptococcus agalactiae serotype III (strain NEM316), this protein is UvrABC system protein C.